We begin with the raw amino-acid sequence, 281 residues long: Stomatin-4 (281 aa).

A helical transmembrane segment spans residues 28 to 48 (WIITIISYLVVLFTLPLSAFF).

This sequence belongs to the band 7/mec-2 family.

Its subcellular location is the membrane. The protein is Stomatin-4 (sto-4) of Caenorhabditis elegans.